Reading from the N-terminus, the 409-residue chain is Methylthioribose-1-phosphate isomerase (409 aa).

Asp277 functions as the Proton donor in the catalytic mechanism.

Belongs to the eIF-2B alpha/beta/delta subunits family. MtnA subfamily.

The protein localises to the cytoplasm. The protein resides in the nucleus. The catalysed reaction is 5-(methylsulfanyl)-alpha-D-ribose 1-phosphate = 5-(methylsulfanyl)-D-ribulose 1-phosphate. Its pathway is amino-acid biosynthesis; L-methionine biosynthesis via salvage pathway; L-methionine from S-methyl-5-thio-alpha-D-ribose 1-phosphate: step 1/6. Catalyzes the interconversion of methylthioribose-1-phosphate (MTR-1-P) into methylthioribulose-1-phosphate (MTRu-1-P). This chain is Methylthioribose-1-phosphate isomerase, found in Scheffersomyces stipitis (strain ATCC 58785 / CBS 6054 / NBRC 10063 / NRRL Y-11545) (Yeast).